Consider the following 312-residue polypeptide: DNA-directed RNA polymerase subunit alpha (312 aa).

Positions 1 to 229 (MLQYQIDRIE…ELFQPLATVT (229 aa)) are alpha N-terminal domain (alpha-NTD). An alpha C-terminal domain (alpha-CTD) region spans residues 246–312 (IPLEELNLSV…ISIPQSRTSA (67 aa)).

The protein belongs to the RNA polymerase alpha chain family. In terms of assembly, in cyanobacteria the RNAP catalytic core is composed of 2 alpha, 1 beta, 1 beta', 1 gamma and 1 omega subunit. When a sigma factor is associated with the core the holoenzyme is formed, which can initiate transcription.

It catalyses the reaction RNA(n) + a ribonucleoside 5'-triphosphate = RNA(n+1) + diphosphate. Its function is as follows. DNA-dependent RNA polymerase catalyzes the transcription of DNA into RNA using the four ribonucleoside triphosphates as substrates. This chain is DNA-directed RNA polymerase subunit alpha, found in Parasynechococcus marenigrum (strain WH8102).